The chain runs to 1551 residues: UDP-glucose:glycoprotein glucosyltransferase 1 (1551 aa).

Positions 1 to 42 are cleaved as a signal peptide; that stretch reads MCSRGDANAAGAAAARRVTGLCYNMGLLIALALLCLFSLAEA. N-linked (GlcNAc...) asparagine glycans are attached at residues Asn269, Asn536, Asn1015, and Asn1228. Residues 1244 to 1551 are glucosyltransferase; sequence KTEEVKQDKD…QEGSQKHEEL (308 aa). Ser1277 is subject to Phosphoserine. A disordered region spans residues 1531 to 1551; it reads KELGTLHEEETQEGSQKHEEL. Positions 1548–1551 match the Prevents secretion from ER motif; that stretch reads HEEL.

It belongs to the glycosyltransferase 8 family. As to quaternary structure, monomer as well as in a tight complex with SELENOF. Interacts with METTL23. Part of a large chaperone multiprotein complex comprising DNAJB11, HSP90B1, HSPA5, HYOU, PDIA2, PDIA4, PDIA6, PPIB, SDF2L1, UGGT1 and very small amounts of ERP29, but not, or at very low levels, CALR nor CANX. Ca(2+) serves as cofactor.

The protein resides in the endoplasmic reticulum lumen. It localises to the endoplasmic reticulum-Golgi intermediate compartment. It catalyses the reaction N(4)-(alpha-D-Man-(1-&gt;2)-alpha-D-Man-(1-&gt;2)-alpha-D-Man-(1-&gt;3)-[alpha-D-Man-(1-&gt;2)-alpha-D-Man-(1-&gt;3)-[alpha-D-Man-(1-&gt;2)-alpha-D-Man-(1-&gt;6)]-alpha-D-Man-(1-&gt;6)]-beta-D-Man-(1-&gt;4)-beta-D-GlcNAc-(1-&gt;4)-beta-D-GlcNAc)-L-asparaginyl-[protein] (N-glucan mannose isomer 9A1,2,3B1,2,3) + UDP-alpha-D-glucose = N(4)-(alpha-D-Glc-(1-&gt;3)-alpha-D-Man-(1-&gt;2)-alpha-D-Man-(1-&gt;2)-alpha-D-Man-(1-&gt;3)-[alpha-D-Man-(1-&gt;2)-alpha-D-Man-(1-&gt;3)-[alpha-D-Man-(1-&gt;2)-alpha-D-Man-(1-&gt;6)]-alpha-D-Man-(1-&gt;6)]-beta-D-Man-(1-&gt;4)-beta-D-GlcNAc-(1-&gt;4)-beta-D-GlcNAc)-L-asparaginyl-[protein] + UDP + H(+). It participates in protein modification; protein glycosylation. In terms of biological role, recognizes glycoproteins with minor folding defects. Reglucosylates single N-glycans near the misfolded part of the protein, thus providing quality control for protein folding in the endoplasmic reticulum. Reglucosylated proteins are recognized by calreticulin for recycling to the endoplasmic reticulum and refolding or degradation. The chain is UDP-glucose:glycoprotein glucosyltransferase 1 (Uggt1) from Rattus norvegicus (Rat).